Here is a 101-residue protein sequence, read N- to C-terminus: NADH-quinone oxidoreductase subunit K (101 aa).

The next 3 membrane-spanning stretches (helical) occupy residues 4 to 24 (LGHL…GIFL), 30 to 50 (IVLL…FIAF), and 62 to 82 (FVFF…AILV).

Belongs to the complex I subunit 4L family. As to quaternary structure, NDH-1 is composed of 14 different subunits. Subunits NuoA, H, J, K, L, M, N constitute the membrane sector of the complex.

The protein resides in the cell inner membrane. It catalyses the reaction a quinone + NADH + 5 H(+)(in) = a quinol + NAD(+) + 4 H(+)(out). Its function is as follows. NDH-1 shuttles electrons from NADH, via FMN and iron-sulfur (Fe-S) centers, to quinones in the respiratory chain. The immediate electron acceptor for the enzyme in this species is believed to be ubiquinone. Couples the redox reaction to proton translocation (for every two electrons transferred, four hydrogen ions are translocated across the cytoplasmic membrane), and thus conserves the redox energy in a proton gradient. This chain is NADH-quinone oxidoreductase subunit K, found in Xylella fastidiosa (strain 9a5c).